Here is a 142-residue protein sequence, read N- to C-terminus: Alpha-lactalbumin (142 aa).

The N-terminal stretch at 1 to 19 (MRFFVPLFLVGILFPAILA) is a signal peptide. Residues 20-142 (KQFTKCELSQ…KLEQWLCEKL (123 aa)) enclose the C-type lysozyme domain. 4 disulfides stabilise this stretch: cysteine 25-cysteine 139, cysteine 47-cysteine 130, cysteine 80-cysteine 96, and cysteine 92-cysteine 110. Positions 57 and 58 each coordinate Ca(2+). A glycan (N-linked (GlcNAc...) asparagine) is linked at asparagine 64. Glutamate 68 is a Zn(2+) binding site. Asparagine 90 carries an N-linked (GlcNAc...) asparagine; atypical; partial glycan. Ca(2+)-binding residues include lysine 98, leucine 100, aspartate 101, aspartate 102, aspartate 103, aspartate 106, and aspartate 107. Glutamate 135 provides a ligand contact to Zn(2+).

Belongs to the glycosyl hydrolase 22 family. In terms of assembly, lactose synthase (LS) is a heterodimer of a catalytic component, beta1,4-galactosyltransferase (beta4Gal-T1) and a regulatory component, alpha-lactalbumin (LA). Mammary gland specific. Secreted in milk.

The protein resides in the secreted. In terms of biological role, regulatory subunit of lactose synthase, changes the substrate specificity of galactosyltransferase in the mammary gland making glucose a good acceptor substrate for this enzyme. This enables LS to synthesize lactose, the major carbohydrate component of milk. In other tissues, galactosyltransferase transfers galactose onto the N-acetylglucosamine of the oligosaccharide chains in glycoproteins. This is Alpha-lactalbumin (LALBA) from Homo sapiens (Human).